The chain runs to 428 residues: Serine--tRNA ligase (428 aa).

An L-serine-binding site is contributed by 231-233 (TAE). 262–264 (RSE) provides a ligand contact to ATP. E285 contacts L-serine. An ATP-binding site is contributed by 349–352 (EISS). S385 serves as a coordination point for L-serine.

Belongs to the class-II aminoacyl-tRNA synthetase family. Type-1 seryl-tRNA synthetase subfamily. As to quaternary structure, homodimer. The tRNA molecule binds across the dimer.

The protein resides in the cytoplasm. It carries out the reaction tRNA(Ser) + L-serine + ATP = L-seryl-tRNA(Ser) + AMP + diphosphate + H(+). It catalyses the reaction tRNA(Sec) + L-serine + ATP = L-seryl-tRNA(Sec) + AMP + diphosphate + H(+). It participates in aminoacyl-tRNA biosynthesis; selenocysteinyl-tRNA(Sec) biosynthesis; L-seryl-tRNA(Sec) from L-serine and tRNA(Sec): step 1/1. Catalyzes the attachment of serine to tRNA(Ser). Is also able to aminoacylate tRNA(Sec) with serine, to form the misacylated tRNA L-seryl-tRNA(Sec), which will be further converted into selenocysteinyl-tRNA(Sec). The polypeptide is Serine--tRNA ligase (Cellvibrio japonicus (strain Ueda107) (Pseudomonas fluorescens subsp. cellulosa)).